A 396-amino-acid chain; its full sequence is Elongation factor Tu 1 (396 aa).

Residues 10 to 206 form the tr-type G domain; the sequence is KPHVNVGTIG…ALDTYIPTPK (197 aa). A G1 region spans residues 19 to 26; the sequence is GHVDHGKT. Residue 19-26 participates in GTP binding; that stretch reads GHVDHGKT. Residue threonine 26 coordinates Mg(2+). The segment at 60-64 is G2; the sequence is GITIS. The interval 81 to 84 is G3; it reads DCPG. GTP contacts are provided by residues 81-85 and 136-139; these read DCPGH and NKAD. The interval 136 to 139 is G4; sequence NKAD. Positions 174 to 176 are G5; the sequence is SAL.

It belongs to the TRAFAC class translation factor GTPase superfamily. Classic translation factor GTPase family. EF-Tu/EF-1A subfamily. Monomer.

Its subcellular location is the cytoplasm. The catalysed reaction is GTP + H2O = GDP + phosphate + H(+). GTP hydrolase that promotes the GTP-dependent binding of aminoacyl-tRNA to the A-site of ribosomes during protein biosynthesis. This chain is Elongation factor Tu 1, found in Ruthia magnifica subsp. Calyptogena magnifica.